Consider the following 426-residue polypeptide: Serine--tRNA ligase (426 aa).

231 to 233 (TSE) contacts L-serine. 262-264 (RSE) contributes to the ATP binding site. Glu285 lines the L-serine pocket. Position 349–352 (349–352 (EISS)) interacts with ATP. Ser385 provides a ligand contact to L-serine.

This sequence belongs to the class-II aminoacyl-tRNA synthetase family. Type-1 seryl-tRNA synthetase subfamily. Homodimer. The tRNA molecule binds across the dimer.

The protein localises to the cytoplasm. It catalyses the reaction tRNA(Ser) + L-serine + ATP = L-seryl-tRNA(Ser) + AMP + diphosphate + H(+). It carries out the reaction tRNA(Sec) + L-serine + ATP = L-seryl-tRNA(Sec) + AMP + diphosphate + H(+). It participates in aminoacyl-tRNA biosynthesis; selenocysteinyl-tRNA(Sec) biosynthesis; L-seryl-tRNA(Sec) from L-serine and tRNA(Sec): step 1/1. Its function is as follows. Catalyzes the attachment of serine to tRNA(Ser). Is also able to aminoacylate tRNA(Sec) with serine, to form the misacylated tRNA L-seryl-tRNA(Sec), which will be further converted into selenocysteinyl-tRNA(Sec). In Legionella pneumophila (strain Lens), this protein is Serine--tRNA ligase.